Consider the following 76-residue polypeptide: Defensin-like protein 5 (76 aa).

The signal sequence occupies residues 1 to 29 (MKVSPRLNSALLLLFMILATVMGLVTVEA). Cystine bridges form between Cys-32–Cys-76, Cys-43–Cys-63, Cys-49–Cys-70, and Cys-53–Cys-72.

This sequence belongs to the DEFL family.

It localises to the secreted. Functionally, confers broad-spectrum resistance to pathogens. The protein is Defensin-like protein 5 (PDF2.4) of Arabidopsis thaliana (Mouse-ear cress).